Here is a 620-residue protein sequence, read N- to C-terminus: Magnesium-chelatase 67 kDa subunit (620 aa).

S33–S40 contributes to the ATP binding site. The disordered stretch occupies residues A272–T322. Acidic residues predominate over residues Q296–T322. Residues L432 to S620 form the VWFA domain.

This sequence belongs to the Mg-chelatase subunits D/I family.

The catalysed reaction is protoporphyrin IX + Mg(2+) + ATP + H2O = Mg-protoporphyrin IX + ADP + phosphate + 3 H(+). It functions in the pathway porphyrin-containing compound metabolism; bacteriochlorophyll biosynthesis. Functionally, involved in bacteriochlorophyll biosynthesis; introduces a magnesium ion into protoporphyrin IX to yield Mg-protoporphyrin IX. The protein is Magnesium-chelatase 67 kDa subunit (bchD) of Chlorobaculum tepidum (strain ATCC 49652 / DSM 12025 / NBRC 103806 / TLS) (Chlorobium tepidum).